Here is a 613-residue protein sequence, read N- to C-terminus: MLFSFLQETAYAVYGLWASFYPSLYQRPLSSSTRHLDHGPDNRGYWKDGFSIKTDYEVEIPEGKLVEYFFTISEAEIAPDGYLTNVTLVNDQFPGPKIEADWGDTIRVTVYNNLTNSNGTSFHWHGIRQFQTNYLDGVPGVTQCPSKPGDTQVYEFRAMQYGTGWYHSHYSLQYTNGARGPVVIHGPSSANYDIDVEPLLITDWYHADAFSYFHEEITDHAHIPTGTLLNGKGVYECDPTKDSRCVSPPGERHTIQFEPGKKHKLRIISSASLATYKFWIDGHNFTVISTDFVPIEPYVTDILIVGVAQRYEVIVEANATFEHGSNFWIHGTHCDDMIPVPWDTRIGIIQYDAEDNSDPYTPPLETTHPGYGCRDPPPTSLVPIVPRQVGNNVNGFSPADYLEIGLQSWPNISDPDSTIRKWVLANRTQYVDWREPSLRKLVHDNGKTNFTQDEAPIVLDYETGEWVYFVIEGNFTMRDPINDPRPIPRSVHPIHLHGHDFAILAQGDGYFSKDVVPNLDNPARRDTVNLPIGGYVWIAFQINNPGTWLMHCHIAWHASAGLSLQFIEQPSKIKPLVEASGILPEMESRCKDWTEHYNKVNIPLGLVQEDSGI.

Plastocyanin-like domains lie at 72–188, 198–331, and 431–571; these read ISEA…HGPS, PLLI…WIHG, and VDWR…EQPS.

This sequence belongs to the multicopper oxidase family.

The protein operates within secondary metabolite biosynthesis. Oxidoreductase; part of the gene cluster that mediates the biosynthesis of dibenzodioxocinones such as pestalotiollide B, a novel class of inhibitors against cholesterol ester transfer protein (CEPT). The biosynthesis initiates from condensation of acetate and malonate units catalyzed by the non-reducing PKS pks8/GME11356. Pks8/GME11356 lacks a thioesterase (TE) domain, which is important to the cyclizing of the third ring of atrochrysone carboxylic acid, and the esterase GME11355 might play the role of TE and catalyzes the cyclization reaction of the C ring. The lactamase-like protein GME11357 (or other beta-lactamases in Pestalotiopsis microspora) probably hydrolyzes the thioester bond between the ACP of pks8/GME11356 and the intermediate to release atrochrysone carboxylic acid, which is spontaneously dehydrates to form endocrocin anthrone. Endocrocin anthrone is further converted to emodin via the endocrocin intermediate. Emodin is then oxidized by several enzymes such as the Baeyer-Villiger oxidase GME11358, the oxidoreductase GME11367, the short chain dehydrogenase/reductase GME11373, as well as by other oxidoreductases from the cluster, to modify the A and C rings and open the B ring, and finally yield monodictyphenone. The prenyltransferase GME11375 may catalyze the addition reaction between the C5 side chains and the carbon bone of dibenzodioxocinones. The remaining biochemical reactions to the final product dibenzodioxocinones should be methylation catalyzed by methyltransferase GME11366 and reduction and lactonization reaction catalyzed by a series of oxidordeuctases. This Pestalotiopsis microspora protein is Oxidoreductase GME11365.